Consider the following 195-residue polypeptide: uncharacterized protein (195 aa).

Disordered regions lie at residues 1-54 and 173-195; these read MPKG…SNKI and LAGA…KPIS. Residues 7-20 are compositionally biased toward basic and acidic residues; the sequence is KPNEKKEELEKFAK. Over residues 45-54 the composition is skewed to polar residues; it reads QNDSSSSNKI. Residues 48-97 are a coiled coil; it reads SSSSNKIVLSQAEKDLLRTELDKTEEEISTLKQVLSARQKHAAELKRKLG.

The protein belongs to the TPD52 family.

This is an uncharacterized protein from Caenorhabditis elegans.